An 87-amino-acid polypeptide reads, in one-letter code: Small ribosomal subunit protein bS20 (87 aa).

Positions 1–28 (MANSAQARKRARQASAQRDHNMSQRSEL) are disordered. Basic and acidic residues predominate over residues 17-28 (QRDHNMSQRSEL).

Belongs to the bacterial ribosomal protein bS20 family.

In terms of biological role, binds directly to 16S ribosomal RNA. The polypeptide is Small ribosomal subunit protein bS20 (Thiobacillus denitrificans (strain ATCC 25259 / T1)).